Reading from the N-terminus, the 329-residue chain is DNA-directed RNA polymerase subunit alpha (329 aa).

The segment at 1 to 235 is alpha N-terminal domain (alpha-NTD); sequence MLGSVTDFLK…EQLEAFVDLR (235 aa). Positions 249 to 329 are alpha C-terminal domain (alpha-CTD); the sequence is FDPILLRPVD…NWPPASIADE (81 aa).

Belongs to the RNA polymerase alpha chain family. As to quaternary structure, homodimer. The RNAP catalytic core consists of 2 alpha, 1 beta, 1 beta' and 1 omega subunit. When a sigma factor is associated with the core the holoenzyme is formed, which can initiate transcription.

It catalyses the reaction RNA(n) + a ribonucleoside 5'-triphosphate = RNA(n+1) + diphosphate. In terms of biological role, DNA-dependent RNA polymerase catalyzes the transcription of DNA into RNA using the four ribonucleoside triphosphates as substrates. In Aeromonas hydrophila subsp. hydrophila (strain ATCC 7966 / DSM 30187 / BCRC 13018 / CCUG 14551 / JCM 1027 / KCTC 2358 / NCIMB 9240 / NCTC 8049), this protein is DNA-directed RNA polymerase subunit alpha.